An 80-amino-acid polypeptide reads, in one-letter code: MTKPQINLQDAFLNQVRKENIPVTIFLINGFQLKGMVKGFDNFTVILESDGKQLMVYKHAISTISPLRPVNTSFSENKPI.

The 61-residue stretch at 10–70 folds into the Sm domain; that stretch reads DAFLNQVRKE…ISTISPLRPV (61 aa).

It belongs to the Hfq family. In terms of assembly, homohexamer.

RNA chaperone that binds small regulatory RNA (sRNAs) and mRNAs to facilitate mRNA translational regulation in response to envelope stress, environmental stress and changes in metabolite concentrations. Also binds with high specificity to tRNAs. The protein is RNA-binding protein Hfq of Desulforamulus reducens (strain ATCC BAA-1160 / DSM 100696 / MI-1) (Desulfotomaculum reducens).